A 121-amino-acid polypeptide reads, in one-letter code: UPF0102 protein Mvan_2202 (121 aa).

Belongs to the UPF0102 family.

This chain is UPF0102 protein Mvan_2202, found in Mycolicibacterium vanbaalenii (strain DSM 7251 / JCM 13017 / BCRC 16820 / KCTC 9966 / NRRL B-24157 / PYR-1) (Mycobacterium vanbaalenii).